A 439-amino-acid chain; its full sequence is GlutamylGlutaminyl-tRNA synthetase (439 aa).

A 'HIGH' region motif is present at residues 6-16 (PSPTGDMHIGN). The short motif at 232-236 (KMSKR) is the 'KMSKS' region element. Residue lysine 235 participates in ATP binding.

This sequence belongs to the class-I aminoacyl-tRNA synthetase family. Glutamate--tRNA ligase type 1 subfamily. Monomer.

Its subcellular location is the cytoplasm. The catalysed reaction is tRNA(Glu) + L-glutamate + ATP = L-glutamyl-tRNA(Gln) + AMP + diphosphate. Functionally, aminoacylates tRNA(Gln) with glutamate. Does not aminoacylate tRNA(Glu). The protein is GlutamylGlutaminyl-tRNA synthetase (gltX2) of Helicobacter pylori (strain ATCC 700392 / 26695) (Campylobacter pylori).